The primary structure comprises 105 residues: uncharacterized protein (105 aa).

At 1 to 48 the chain is on the extracellular side; the sequence is MAPKAFFVCLPWVLPRHALIVRQAGNPYHFLAYTNPRAPGKLQDSHCP. A helical membrane pass occupies residues 49 to 69; that stretch reads VFFMGIIIITIITVTLAIIII. Residue N70 is a topological domain, cytoplasmic. Residues 71 to 91 traverse the membrane as a helical segment; sequence IIFLTLFDDGMCFYCSLLTFS. Over 92–105 the chain is Extracellular; that stretch reads FVSFNFDHFDHFDL.

It is found in the membrane. This is an uncharacterized protein from Saccharomyces cerevisiae (strain ATCC 204508 / S288c) (Baker's yeast).